Consider the following 238-residue polypeptide: Ribosomal RNA small subunit methyltransferase G (238 aa).

Residues glycine 99, leucine 104, 122–124, 150–151, and arginine 164 contribute to the S-adenosyl-L-methionine site; these read DAT and VE.

This sequence belongs to the methyltransferase superfamily. RNA methyltransferase RsmG family.

The protein resides in the cytoplasm. Specifically methylates the N7 position of a guanine in 16S rRNA. The polypeptide is Ribosomal RNA small subunit methyltransferase G (Chlorobium luteolum (strain DSM 273 / BCRC 81028 / 2530) (Pelodictyon luteolum)).